The primary structure comprises 1416 residues: DNA-directed RNA polymerase subunit beta' (1416 aa).

Zn(2+) contacts are provided by cysteine 71, cysteine 73, cysteine 86, and cysteine 89. The Mg(2+) site is built by aspartate 461, aspartate 463, and aspartate 465. Positions 815, 889, 896, and 899 each coordinate Zn(2+).

Belongs to the RNA polymerase beta' chain family. The RNAP catalytic core consists of 2 alpha, 1 beta, 1 beta' and 1 omega subunit. When a sigma factor is associated with the core the holoenzyme is formed, which can initiate transcription. Requires Mg(2+) as cofactor. Zn(2+) serves as cofactor.

The catalysed reaction is RNA(n) + a ribonucleoside 5'-triphosphate = RNA(n+1) + diphosphate. Functionally, DNA-dependent RNA polymerase catalyzes the transcription of DNA into RNA using the four ribonucleoside triphosphates as substrates. The protein is DNA-directed RNA polymerase subunit beta' of Haemophilus influenzae (strain PittGG).